Consider the following 139-residue polypeptide: NADPH-dependent 7-cyano-7-deazaguanine reductase (139 aa).

The active-site Thioimide intermediate is the Cys34. The Proton donor role is filled by Asp41. Residues 56-58 (IEL) and 75-76 (HE) each bind substrate.

It belongs to the GTP cyclohydrolase I family. QueF type 1 subfamily.

It is found in the cytoplasm. The enzyme catalyses 7-aminomethyl-7-carbaguanine + 2 NADP(+) = 7-cyano-7-deazaguanine + 2 NADPH + 3 H(+). The protein operates within tRNA modification; tRNA-queuosine biosynthesis. In terms of biological role, catalyzes the NADPH-dependent reduction of 7-cyano-7-deazaguanine (preQ0) to 7-aminomethyl-7-deazaguanine (preQ1). The sequence is that of NADPH-dependent 7-cyano-7-deazaguanine reductase from Nitrosomonas europaea (strain ATCC 19718 / CIP 103999 / KCTC 2705 / NBRC 14298).